Consider the following 59-residue polypeptide: UPF0291 protein CPR_1073 (59 aa).

The segment at 1-30 is disordered; it reads MNIDELTKRINELHKKHKEEGLSEDEHKER.

The protein belongs to the UPF0291 family.

It is found in the cytoplasm. The sequence is that of UPF0291 protein CPR_1073 from Clostridium perfringens (strain SM101 / Type A).